Reading from the N-terminus, the 493-residue chain is Angiopoietin-related protein 2 (493 aa).

A signal peptide spans 1–22 (MRPLCVTCWWLGLLAAMGAVAG). Coiled-coil stretches lie at residues 76-115 (PEVL…VDGG) and 152-206 (ALEL…HCQR). N-linked (GlcNAc...) asparagine glycosylation is found at asparagine 164 and asparagine 192. One can recognise a Fibrinogen C-terminal domain in the interval 269–489 (DKPSGPWRDC…KVVMMIRPNP (221 aa)). 2 cysteine pairs are disulfide-bonded: cysteine 278-cysteine 307 and cysteine 430-cysteine 443.

Post-translationally, N-glycosylated. Widely expressed in heart, small intestine, spleen and stomach. Also found in lower levels in colon, ovary, adrenal gland, skeletal muscle and in prostate.

Its subcellular location is the secreted. Induces sprouting in endothelial cells through an autocrine and paracrine action. The polypeptide is Angiopoietin-related protein 2 (ANGPTL2) (Homo sapiens (Human)).